A 178-amino-acid chain; its full sequence is Dual-action ribosomal maturation protein DarP (178 aa).

It belongs to the DarP family.

Its subcellular location is the cytoplasm. Its function is as follows. Member of a network of 50S ribosomal subunit biogenesis factors which assembles along the 30S-50S interface, preventing incorrect 23S rRNA structures from forming. Promotes peptidyl transferase center (PTC) maturation. This chain is Dual-action ribosomal maturation protein DarP, found in Mannheimia succiniciproducens (strain KCTC 0769BP / MBEL55E).